A 137-amino-acid polypeptide reads, in one-letter code: Protein ApaG (137 aa).

The ApaG domain maps to 2 to 126; that stretch reads PKYQFQVQVQ…FVLEAFSPGQ (125 aa).

The sequence is that of Protein ApaG from Acidovorax sp. (strain JS42).